The chain runs to 1623 residues: Histone-lysine N-methyltransferase set-9 (1623 aa).

Disordered regions lie at residues 1 to 102 (MADG…APQQ), 112 to 131 (AADA…RPTE), 198 to 227 (EDAV…SVAS), 448 to 600 (QRPG…VLRP), and 645 to 781 (TGQS…DEAA). Residues 62 to 71 (HQMENQEFYH) are compositionally biased toward basic and acidic residues. The segment covering 77 to 100 (EPQQIPQIPVFQPAAYNPPNYVAP) has biased composition (low complexity). The segment covering 206–227 (PGTQYRRNQQAGGGLPSTSVAS) has biased composition (polar residues). Residues 554–573 (MTQEEKNAHFARLTTDKEKP) show a composition bias toward basic and acidic residues. Pro residues predominate over residues 587 to 597 (PHVPPPPPPLV). The segment covering 645–669 (TGQSGSSAAARQRTVSGSAARAQTY) has biased composition (polar residues). Residues 723 to 733 (HRPRGRPKGTR) show a composition bias toward basic residues. Over residues 772-781 (SESEGIDEAA) the composition is skewed to acidic residues. A PHD-type zinc finger spans residues 786-834 (TMRCHCGMDHGDGDTIECEGCKTWQHMACMGLTLKSNTSKYKCEMCLPR). The tract at residues 857–895 (AARKQKRKSEPVEQKQKSSQPSTSRKSAPMALQQPAEPR) is disordered. The segment covering 873–882 (KSSQPSTSRK) has biased composition (polar residues). Positions 965–1056 (MSSEVKRQPG…RNTEVTLPFD (92 aa)) constitute an SET domain. Basic and acidic residues-rich tracts occupy residues 1089 to 1157 (AERH…KKME) and 1172 to 1194 (AREE…EGKR). Disordered regions lie at residues 1089–1318 (AERH…NVAP) and 1356–1623 (LLAG…TRWN). Residues 1093–1201 (RAMDHKKQEA…GKRKEARRRS (109 aa)) are a coiled coil. Over residues 1242-1252 (TTQPSTSSFAT) the composition is skewed to polar residues. A compositionally biased stretch (low complexity) spans 1282-1293 (ATTVATPKATTA). A coiled-coil region spans residues 1364–1401 (FSEVRAQIEEENRMKERSRKREAKKKAVEKEKKEHRKE). Composition is skewed to basic and acidic residues over residues 1365-1378 (SEVR…NRMK), 1388-1406 (KKAV…KKTN), 1413-1429 (KSEK…EKKP), and 1447-1464 (KKTE…ESSS). Polar residues predominate over residues 1533–1544 (SSSNTAPTTTIA).

It belongs to the class V-like SAM-binding methyltransferase superfamily. In terms of tissue distribution, predominantly expressed in the germline (at protein level).

It localises to the nucleus. The catalysed reaction is L-lysyl-[histone] + S-adenosyl-L-methionine = N(6)-methyl-L-lysyl-[histone] + S-adenosyl-L-homocysteine + H(+). Histone methyltransferase. Might play a role in transcriptional regulation. Together with set-26, negatively regulates lifespan in a germline-independent, partially daf-16-dependent fashion. Together with set-26, plays a role in germline development and maintenance and might play a role in the restriction of the trimethylation mark on histone H3 'Lys-4'(H3K4me3) to target genes specifically in the germline. The chain is Histone-lysine N-methyltransferase set-9 from Caenorhabditis elegans.